Reading from the N-terminus, the 113-residue chain is Ubiquinol-cytochrome-c reductase complex assembly factor 4 (113 aa).

Residues Met1–Ala18 form the signal peptide. The Mitochondrial matrix portion of the chain corresponds to Ala19–Lys72. Residues Val73 to Phe89 form a helical membrane-spanning segment. At Arg90 to Lys113 the chain is on the mitochondrial intermembrane side.

The protein belongs to the UQCC4 family.

The protein localises to the mitochondrion inner membrane. In terms of biological role, required for the assembly and stability of the mitochondrial ubiquinol-cytochrome c reductase complex (complex III (CIII) or cytochrome b-c1 complex), a multisubunit transmembrane complex that is part of the mitochondrial electron transport chain (ETC) which drives oxidative phosphorylation. The sequence is that of Ubiquinol-cytochrome-c reductase complex assembly factor 4 (uqcc4) from Xenopus tropicalis (Western clawed frog).